A 313-amino-acid polypeptide reads, in one-letter code: NADH-ubiquinone oxidoreductase chain 1 (313 aa).

8 helical membrane-spanning segments follow: residues Ile2 to Leu22, Val72 to Pro92, Phe102 to Gly122, Leu148 to Phe168, Glu173 to Ala193, Phe222 to Phe244, Phe249 to Phe268, and Leu293 to Leu313.

Belongs to the complex I subunit 1 family.

It localises to the mitochondrion inner membrane. It catalyses the reaction a ubiquinone + NADH + 5 H(+)(in) = a ubiquinol + NAD(+) + 4 H(+)(out). Its function is as follows. Core subunit of the mitochondrial membrane respiratory chain NADH dehydrogenase (Complex I) that is believed to belong to the minimal assembly required for catalysis. Complex I functions in the transfer of electrons from NADH to the respiratory chain. The immediate electron acceptor for the enzyme is believed to be ubiquinone. This is NADH-ubiquinone oxidoreductase chain 1 (ND1) from Branchiostoma lanceolatum (Common lancelet).